The chain runs to 439 residues: Tol-Pal system protein TolB (439 aa).

Residues 1 to 22 form the signal peptide; sequence MKKPLRWLAALTVLLLPLSALA.

The protein belongs to the TolB family. The Tol-Pal system is composed of five core proteins: the inner membrane proteins TolA, TolQ and TolR, the periplasmic protein TolB and the outer membrane protein Pal. They form a network linking the inner and outer membranes and the peptidoglycan layer.

It localises to the periplasm. Part of the Tol-Pal system, which plays a role in outer membrane invagination during cell division and is important for maintaining outer membrane integrity. The chain is Tol-Pal system protein TolB from Xanthomonas oryzae pv. oryzae (strain MAFF 311018).